Consider the following 388-residue polypeptide: GTPase Obg (388 aa).

Residues 1-159 enclose the Obg domain; sequence MKFVDEAVIR…RSLKLELLLL (159 aa). The 174-residue stretch at 160–333 folds into the OBG-type G domain; that stretch reads ADVGLLGMPN…LATKLLDFIQ (174 aa). GTP-binding positions include 166 to 173, 191 to 195, 213 to 216, 283 to 286, and 314 to 316; these read GMPNAGKS, FTTLV, DIPG, NKAD, and SAY. Mg(2+) is bound by residues serine 173 and threonine 193.

The protein belongs to the TRAFAC class OBG-HflX-like GTPase superfamily. OBG GTPase family. Monomer. Mg(2+) is required as a cofactor.

Its subcellular location is the cytoplasm. Functionally, an essential GTPase which binds GTP, GDP and possibly (p)ppGpp with moderate affinity, with high nucleotide exchange rates and a fairly low GTP hydrolysis rate. Plays a role in control of the cell cycle, stress response, ribosome biogenesis and in those bacteria that undergo differentiation, in morphogenesis control. This Shewanella sp. (strain MR-4) protein is GTPase Obg.